The chain runs to 137 residues: Small ribosomal subunit protein uS9 (137 aa).

The segment covering 105 to 117 (LKIEGHLSRDPRA) has biased composition (basic and acidic residues). Residues 105 to 137 (LKIEGHLSRDPRAKERRKYGLKKARKAPQFSKR) are disordered. Positions 118–137 (KERRKYGLKKARKAPQFSKR) are enriched in basic residues.

The protein belongs to the universal ribosomal protein uS9 family.

The polypeptide is Small ribosomal subunit protein uS9 (Prochlorococcus marinus (strain MIT 9211)).